The chain runs to 375 residues: MAARPRKNNVSVPNLYPLYSRKVNKVYWRYKHPVTGKFHALGTNEAEAIAIATEANTRLAEQRTRQILAISDRIATSKGKAITTSTWLDRYQAIQDDRLKSGDIRLNTYKQKAKPVSLLRERAGMKLISAVDVRDIAQLLDEYIAAGRPRMAQVVRSVLIDVFKEAQHYGEVPPGYNPALATKQPRRKITRQRLSLEEWKKIFDIADATHRYMGNAMLLALVTGQRLGDISRMKFSDIWDDHLHVIQEKTGSKIAIPLSLRLNAINWSLRDVVARCRDYAVSAYLVHFFRSTSQAERGAQVKANTLTMNFSKARDLARIDWGEGSPATFHEQRSLSERLYKEQGLDTQKLLGHKTQQQTDRYHDDRGKGWSKVAL.

Residues 82–167 (ITTSTWLDRY…VLIDVFKEAQ (86 aa)) form the Core-binding (CB) domain. Residues 189–375 (ITRQRLSLEE…RGKGWSKVAL (187 aa)) enclose the Tyr recombinase domain. Active-site residues include R226, K249, H330, R333, and H353. The interval 350 to 375 (LLGHKTQQQTDRYHDDRGKGWSKVAL) is disordered. The O-(3'-phospho-DNA)-tyrosine intermediate role is filled by Y362.

Belongs to the 'phage' integrase family.

Its function is as follows. Integrase from the cryptic lambdoid prophage e14. Integrase is necessary for integration of the phage into the host genome by site-specific recombination. In conjunction with excisionase, integrase is also necessary for excision of the prophage from the host genome. The sequence is that of Prophage integrase IntE (intE) from Escherichia coli (strain K12).